The following is a 64-amino-acid chain: MGNIRETNIKRTAFSLLENYGDVFTKDFETNKALVTKYTTIESKIIRNRVAGYVTRKVARMKVY.

The protein belongs to the eukaryotic ribosomal protein eS17 family.

The protein is Small ribosomal subunit protein eS17 of Methanosarcina acetivorans (strain ATCC 35395 / DSM 2834 / JCM 12185 / C2A).